The primary structure comprises 193 residues: Putative 3-methyladenine DNA glycosylase (193 aa).

The protein belongs to the DNA glycosylase MPG family.

The chain is Putative 3-methyladenine DNA glycosylase from Nitrosospira multiformis (strain ATCC 25196 / NCIMB 11849 / C 71).